Consider the following 427-residue polypeptide: MTWFIDRRLNGKNKSMVNRQRFLRRYKAQIKQSISEAINKRSVTDVDSGESVSIPTEDISEPMFHQGRGGLRHRVHPGNDHFVQSDRIERPQGGGGGSGSGQGQASQDGEGQDEFVFQISKDEYLDLLFEDLALPNLKRNQQRQLTEYKTHRAGYTANGVPANISVVRSLQNSLARRTAMTAGKRRELHALEETLQIISNSEPAQLLEEERLRKEIAELREKISRVPFIDTFDLRYKNYEKRPDPSSQAVMFCLMDVSGSMDQSTKDMAKRFYILLYLFLSRTYKNVEVVYIRHHTQAKEVDEHEFFYSQETGGTIVSSALKLMDEVVQARYDPAQWNIYAAQASDGDNWADDSPLCHEILAKKLLPVVRYYSYIEITRRAHQTLWREYEHLQSTFENFAMQHIRDQDDIYPVFRELFHKQNATVKD.

A disordered region spans residues Q84–E110. Gly residues predominate over residues Q92 to Q102.

This sequence belongs to the UPF0229 family.

The sequence is that of UPF0229 protein YeaH from Escherichia fergusonii (strain ATCC 35469 / DSM 13698 / CCUG 18766 / IAM 14443 / JCM 21226 / LMG 7866 / NBRC 102419 / NCTC 12128 / CDC 0568-73).